The primary structure comprises 73 residues: Hypotensin-like peptide (73 aa).

Residues methionine 1–glycine 25 form the signal peptide.

In terms of tissue distribution, expressed by the venom gland.

It localises to the secreted. In terms of biological role, may potentiate the hypotensive effect of bradykinin. This Tityus serrulatus (Brazilian scorpion) protein is Hypotensin-like peptide.